The primary structure comprises 787 residues: Aconitate hydratase, mitochondrial (787 aa).

A mitochondrion-targeting transit peptide spans 1–33 (MISTRLARAGALAPKSRLFLGTRAFATVGDSPL). Substrate is bound by residues Q104 and 197-199 (DSH). Residues C390, C453, and C456 each contribute to the [4Fe-4S] cluster site. R479 and R484 together coordinate substrate. The interval 529–559 (LQPPTGEGLPAKGYDPGRDTYQAPPADRSSV) is disordered. Residues R612 and 675-676 (SR) each bind substrate.

The protein belongs to the aconitase/IPM isomerase family. [4Fe-4S] cluster is required as a cofactor.

The protein localises to the mitochondrion. It catalyses the reaction citrate = D-threo-isocitrate. The catalysed reaction is (2R)-homocitrate = cis-homoaconitate + H2O. It participates in carbohydrate metabolism; tricarboxylic acid cycle; isocitrate from oxaloacetate: step 2/2. Its pathway is amino-acid biosynthesis; L-lysine biosynthesis via AAA pathway; L-alpha-aminoadipate from 2-oxoglutarate: step 2/5. Catalyzes the isomerization of citrate to isocitrate via cis-aconitate, a step in the citric acid cycle. Also catalyzes the reversible dehydration of (R)-homocitrate to cis-homoaconitate, a step in the alpha-aminoadipate pathway for lysine biosynthesis. The sequence is that of Aconitate hydratase, mitochondrial (acoA) from Aspergillus fumigatus (strain ATCC MYA-4609 / CBS 101355 / FGSC A1100 / Af293) (Neosartorya fumigata).